Reading from the N-terminus, the 1157-residue chain is DNA-directed RNA polymerase subunit beta (1157 aa).

This sequence belongs to the RNA polymerase beta chain family. The RNAP catalytic core consists of 2 alpha, 1 beta, 1 beta' and 1 omega subunit. When a sigma factor is associated with the core the holoenzyme is formed, which can initiate transcription.

The catalysed reaction is RNA(n) + a ribonucleoside 5'-triphosphate = RNA(n+1) + diphosphate. In terms of biological role, DNA-dependent RNA polymerase catalyzes the transcription of DNA into RNA using the four ribonucleoside triphosphates as substrates. The chain is DNA-directed RNA polymerase subunit beta from Tropheryma whipplei (strain TW08/27) (Whipple's bacillus).